The primary structure comprises 270 residues: Interleukin-1 alpha (270 aa).

The propeptide occupies 1–112; that stretch reads MAKVPDLFED…EVEEEIMKPR (112 aa). An N6-acetyllysine modification is found at Lys-82. A nuclear localization signal (NLS) region spans residues 82–86; the sequence is KKRRL. Residue Ser-87 is modified to Phosphoserine. An N-linked (GlcNAc...) asparagine glycan is attached at Asn-139.

This sequence belongs to the IL-1 family. In terms of assembly, monomer. Interacts with TMED10; the interaction mediates the translocation from the cytoplasm into the ERGIC (endoplasmic reticulum-Golgi intermediate compartment) and thereby secretion. Interacts with IL1R1. Interacts with S100A13; this interaction is the first step in the export of IL1A, followed by direct translocation of this complex across the plasma membrane. Post-translationally, acetylated within its nuclear localization sequence, which impacts subcellular localization. Proteolytic processed by CAPN1 in a calcium-dependent manner. Cleavage from 31 kDa precursor to 18 kDa biologically active molecules. In terms of processing, phosphorylated. Phosphorylation greatly enhances susceptibility to digestion and promotes the conversion of pre-IL1A alpha to the biologically active IL1A.

It localises to the nucleus. Its subcellular location is the cytoplasm. The protein resides in the secreted. Functionally, cytokine constitutively present intracellularly in nearly all resting non-hematopoietic cells that plays an important role in inflammation and bridges the innate and adaptive immune systems. After binding to its receptor IL1R1 together with its accessory protein IL1RAP, forms the high affinity interleukin-1 receptor complex. Signaling involves the recruitment of adapter molecules such as MYD88, IRAK1 or IRAK4. In turn, mediates the activation of NF-kappa-B and the three MAPK pathways p38, p42/p44 and JNK pathways. Within the cell, acts as an alarmin and cell death results in its liberation in the extracellular space after disruption of the cell membrane to induce inflammation and alert the host to injury or damage. In addition to its role as a danger signal, which occurs when the cytokine is passively released by cell necrosis, directly senses DNA damage and acts as signal for genotoxic stress without loss of cell integrity. This Felis catus (Cat) protein is Interleukin-1 alpha (IL1A).